Consider the following 785-residue polypeptide: Protein translocase subunit SecA 3 (785 aa).

Residues Gln-98, 116-120, and Asp-505 contribute to the ATP site; that span reads GEGKT.

The protein belongs to the SecA family. Monomer and homodimer. Part of the essential Sec protein translocation apparatus which comprises SecA, SecYEG and auxiliary proteins SecDF. Other proteins may also be involved.

The protein resides in the cell membrane. The protein localises to the cytoplasm. The enzyme catalyses ATP + H2O + cellular proteinSide 1 = ADP + phosphate + cellular proteinSide 2.. Part of the Sec protein translocase complex. Interacts with the SecYEG preprotein conducting channel. Has a central role in coupling the hydrolysis of ATP to the transfer of proteins into and across the cell membrane, serving as an ATP-driven molecular motor driving the stepwise translocation of polypeptide chains across the membrane. The protein is Protein translocase subunit SecA 3 of Mycolicibacterium vanbaalenii (strain DSM 7251 / JCM 13017 / BCRC 16820 / KCTC 9966 / NRRL B-24157 / PYR-1) (Mycobacterium vanbaalenii).